A 306-amino-acid polypeptide reads, in one-letter code: D-alanine--D-alanine ligase (306 aa).

Positions 101–303 (KLLWQGAGLP…FSQLVVRILE (203 aa)) constitute an ATP-grasp domain. An ATP-binding site is contributed by 134–189 (ISALGLPLIVKPSREGSSVGMTKVVEENALQGALSLAFQHDDEILIEKWLCGPEFT). 3 residues coordinate Mg(2+): Asp-257, Glu-270, and Asn-272.

This sequence belongs to the D-alanine--D-alanine ligase family. It depends on Mg(2+) as a cofactor. Requires Mn(2+) as cofactor.

The protein resides in the cytoplasm. The catalysed reaction is 2 D-alanine + ATP = D-alanyl-D-alanine + ADP + phosphate + H(+). The protein operates within cell wall biogenesis; peptidoglycan biosynthesis. Functionally, cell wall formation. The chain is D-alanine--D-alanine ligase from Salmonella paratyphi A (strain ATCC 9150 / SARB42).